Reading from the N-terminus, the 484-residue chain is Fumarate hydratase class II (484 aa).

Residues 1 to 22 (MPSILDLPIGTGATGKRKESDS) are disordered. Residues 110-112 (SGT), 141-144 (HPND), 151-153 (SSN), and Thr-199 each bind substrate. His-200 (proton donor/acceptor) is an active-site residue. Residue Ser-330 is part of the active site. Substrate is bound by residues Ser-331 and 336–338 (KVN).

This sequence belongs to the class-II fumarase/aspartase family. Fumarase subfamily. As to quaternary structure, homotetramer.

It localises to the cytoplasm. It catalyses the reaction (S)-malate = fumarate + H2O. It functions in the pathway carbohydrate metabolism; tricarboxylic acid cycle; (S)-malate from fumarate: step 1/1. In terms of biological role, involved in the TCA cycle. Catalyzes the stereospecific interconversion of fumarate to L-malate. The chain is Fumarate hydratase class II from Methanosarcina acetivorans (strain ATCC 35395 / DSM 2834 / JCM 12185 / C2A).